A 1071-amino-acid polypeptide reads, in one-letter code: MTTTNKDGPFRQQYLPGVHKEPNLAISESTHSSDWYSATSSEDCFQAASQSFSSQKSNGNVITQQPGKLHCEISDPKSCSFVPAISTDNAQMGTSGIIKYRSYSNPDLLVAMSPLAYRDEAPQSQKSVANSRQDLTQTSCEVVTVSETVVNADSITTTTVTSSTTTTATASQEDFIMVEAEQDETAGLCDATMPLVDKKNITTSSTTSSPSRQITPRIENGLSFENVVSLVKIFPAFVNKLLKKPWYASRCDEVCQFPKAELAYYDIVSTDVDDEHFVIVAGKVTTDEHLMDNQFHLVFAPVGFSEDVSLDERPFSLFRATDKKDLMDLLHLCDEKSFLFTSLDMSTMRADILRSKIEELVIQIRLKPHYHMIHVAIATDRLDFFSDGMIKTMNETLEPFESQLRCLCHTENCYPVHLALTMDRQKIVERLLELDPTLFCETDKAGNNVWHHVNSSFCAQIIWDRCPASQHFIDERNMDGQSPLNEAVSTAKPLVATFLIGKGAKFTRGDRNELFVAMTSKNAQSVVEVVLTDKPEIANERDALGNSAIHVALYKESLNALLNRKVELGLDIDVKNNAGETALLLFITTRKPDLLPLLVTLYAHGANMNATDPHGNTALHKSAALVDAKKISLECVKFLISAGSNPNKINLRGESPRHLAASLQNQEMLAILKAAGATRCPKGYKGCRSNCRHDCSSAEDEYEETLQKIRIGNESDYEKTEFTASEKLNIQDTLDGSRRGKKAKVNLISMDGGGIRGLVIIQTLIAIEERLGDDIFKYFDWSAGTSTGSLIMAGLATGKSLREMQQTYLLLKDRVFDGIMPPYDTVQLEKFIQDQFGTGTVWEIPYPRLMISAVNSEKLPVRLEMARNYKPAKDVAPETPKEMPLWMALRRSTAAPVLFKPSEDRYIDGGIISNNPALDLMSEVHAYNRELQLSGRKSDAVQMNVLVSFGTGQIPSTVIETLSIDSNSPLQSIKTIKNLAAMFIDQATASEGAPVARSRQWADSLEIPFFRFSAPLSKNIFLSSTSDLDVCTMMWDSFIYCRKHRDYIDELVKVLKHDTDHPHVKTPFTDL.

Positions M1–P22 are disordered. ANK repeat units lie at residues E411–C440, D479–R508, D510–N539, L544–L570, A578–A610, H614–L651, and R652–P681. Residues I748 to M921 enclose the PNPLA domain. The GXGXXG signature appears at G752–G757. The GXSXG signature appears at G784–G788. S786 (nucleophile) is an active-site residue. The Proton acceptor role is filled by D908. The DGA/G motif lies at D908–G910.

Belongs to the patatin family.

The enzyme catalyses a 1,2-diacyl-sn-glycero-3-phosphocholine + H2O = a 1-acyl-sn-glycero-3-phosphocholine + a fatty acid + H(+). In terms of biological role, phospholipase that plays a critical role during oogenesis, ovulation, and/or embryogenesis. The sequence is that of Intracellular phospholipase A2 from Caenorhabditis elegans.